We begin with the raw amino-acid sequence, 141 residues long: Acetyltransferase YpeA (141 aa).

The N-acetyltransferase domain occupies 1–141; sequence MEIRVFRQED…GKRLIEDEEY (141 aa).

The protein belongs to the acetyltransferase family. YpeA subfamily.

This Escherichia coli O157:H7 protein is Acetyltransferase YpeA.